The following is a 1468-amino-acid chain: DNA polymerase III PolC-type (1468 aa).

The tract at residues 197–217 (QKSLEDSAPPSEEVTPTQNYD) is disordered. Residues 430–586 (YVVFDVETTG…YDAEATGRLL (157 aa)) enclose the Exonuclease domain.

It belongs to the DNA polymerase type-C family. PolC subfamily.

The protein localises to the cytoplasm. It catalyses the reaction DNA(n) + a 2'-deoxyribonucleoside 5'-triphosphate = DNA(n+1) + diphosphate. In terms of biological role, required for replicative DNA synthesis. This DNA polymerase also exhibits 3' to 5' exonuclease activity. The sequence is that of DNA polymerase III PolC-type from Streptococcus agalactiae serotype III (strain NEM316).